We begin with the raw amino-acid sequence, 380 residues long: Endopolygalacturonase AN8327 (380 aa).

The signal sequence occupies residues 1 to 19; that stretch reads MFYALGPLALFAFATEVMA. Residues 20–35 constitute a propeptide that is removed on maturation; it reads TPVAYPMTTASPTLAK. A disulfide bond links C39 and C57. 7 PbH1 repeats span residues 147–169, 170–200, 201–222, 223–243, 252–273, 281–303, and 315–338; these read LTDS…SING, CDGL…DIGE, SSNV…AVNS, GTSI…SIGS, VDTV…RIKA, IKGV…LIEQ, and TSGI…DSDG. D215 functions as the Proton donor in the catalytic mechanism. C217 and C233 are disulfide-bonded. Residue H237 is part of the active site. Residue N327 is glycosylated (N-linked (GlcNAc...) asparagine). C345 and C350 are disulfide-bonded. A glycan (N-linked (GlcNAc...) asparagine) is linked at N352. An intrachain disulfide couples C369 to C378.

The protein belongs to the glycosyl hydrolase 28 family.

The protein resides in the secreted. The catalysed reaction is (1,4-alpha-D-galacturonosyl)n+m + H2O = (1,4-alpha-D-galacturonosyl)n + (1,4-alpha-D-galacturonosyl)m.. Involved in maceration and soft-rotting of plant tissue. Hydrolyzes the 1,4-alpha glycosidic bonds of de-esterified pectate in the smooth region of the plant cell wall. The chain is Endopolygalacturonase AN8327 from Emericella nidulans (strain FGSC A4 / ATCC 38163 / CBS 112.46 / NRRL 194 / M139) (Aspergillus nidulans).